Reading from the N-terminus, the 360-residue chain is NADP-dependent alcohol dehydrogenase 6 (360 aa).

Cys46 lines the Zn(2+) pocket. The NADP(+) site is built by Gly47 and His51. Zn(2+)-binding residues include His68, Cys100, Cys103, Cys106, and Cys114. A Phosphoserine modification is found at Ser131. Cys163 is a binding site for Zn(2+). NADP(+)-binding residues include Leu188, Gly190, Ile191, Ser210, Arg211, Lys215, Cys250, Ser252, Thr255, Asp256, Ile275, Ile277, Tyr298, Ser299, Leu301, and Arg348. Position 359 is a phosphoserine (Ser359).

It belongs to the zinc-containing alcohol dehydrogenase family. Homodimer. Requires Zn(2+) as cofactor.

The protein resides in the cytoplasm. It localises to the nucleus. The catalysed reaction is a primary alcohol + NADP(+) = an aldehyde + NADPH + H(+). It catalyses the reaction (E)-cinnamyl alcohol + NADP(+) = (E)-cinnamaldehyde + NADPH + H(+). It carries out the reaction hexan-1-ol + NADP(+) = hexanal + NADPH + H(+). The enzyme catalyses 3-methylbutanol + NADP(+) = 3-methylbutanal + NADPH + H(+). The catalysed reaction is S-nitroso-CoA + NADPH + H(+) = sulfinamide-CoA + NADP(+). NADP-dependent, medium-chain alcohol dehydrogenase with a broad substrate specificity. Aldehydes exhibited 50-12000 times higher catalytic efficiency than the corresponding alcohols, therefore the major function of the enzyme is as an aldehyde reductase. The enzyme is active towards aromatic and aliphatic (linear and branched-chain) aldehydes. The enzyme is very active towards aromatic aldehydes, such as cinnamaldehyde, benzaldehyde and substituted benzaldehydes, such as veratraldehyde and panisaldehyde. It exhibits low activity towards substituted cinnamaldehydes, such as coniferaldehyde and sinapaldehyde. The enzyme has no activity with ketones, such as acetone or cyclohexanone. For the reverse reaction, linear and branched-chain primary alcohols are substrates, whereas very low activity is found with secondary alcohols, such as butan-2-ol. The enzyme may be physiologically involved in several steps of the lignin degradation pathway, initiated by other microorganisms, in the synthesis of fusel alcohols, products derived from the aminoacidic metabolism, and in the homeostasis of NADP(H). Has the ability to reduce 5-hydroxymethyl furfural (HMF), a furan derivative which is formed during the hydrolysis of lignocellulosic materials, to 5-hydroxymethylfurfuryl alcohol, thereby alleviating the inhibition of the fermentation of lignocellulose hydrolysates by HMF during fuel ethanol production. Also acts as an inhibitor of protein S-nitrosylation by mediating degradation of S-nitroso-coenzyme A (S-nitroso-CoA), a cofactor required to S-nitrosylate proteins. The polypeptide is NADP-dependent alcohol dehydrogenase 6 (Saccharomyces cerevisiae (strain ATCC 204508 / S288c) (Baker's yeast)).